A 376-amino-acid polypeptide reads, in one-letter code: 4-hydroxy-3-methylbut-2-en-1-yl diphosphate synthase (flavodoxin) (376 aa).

Positions 272, 275, 307, and 314 each coordinate [4Fe-4S] cluster.

The protein belongs to the IspG family. It depends on [4Fe-4S] cluster as a cofactor.

The catalysed reaction is (2E)-4-hydroxy-3-methylbut-2-enyl diphosphate + oxidized [flavodoxin] + H2O + 2 H(+) = 2-C-methyl-D-erythritol 2,4-cyclic diphosphate + reduced [flavodoxin]. It functions in the pathway isoprenoid biosynthesis; isopentenyl diphosphate biosynthesis via DXP pathway; isopentenyl diphosphate from 1-deoxy-D-xylulose 5-phosphate: step 5/6. Functionally, converts 2C-methyl-D-erythritol 2,4-cyclodiphosphate (ME-2,4cPP) into 1-hydroxy-2-methyl-2-(E)-butenyl 4-diphosphate. The chain is 4-hydroxy-3-methylbut-2-en-1-yl diphosphate synthase (flavodoxin) from Blochmanniella pennsylvanica (strain BPEN).